The sequence spans 109 residues: Large ribosomal subunit protein uL24 (109 aa).

This sequence belongs to the universal ribosomal protein uL24 family. As to quaternary structure, part of the 50S ribosomal subunit.

Functionally, one of two assembly initiator proteins, it binds directly to the 5'-end of the 23S rRNA, where it nucleates assembly of the 50S subunit. Its function is as follows. One of the proteins that surrounds the polypeptide exit tunnel on the outside of the subunit. The polypeptide is Large ribosomal subunit protein uL24 (Ehrlichia chaffeensis (strain ATCC CRL-10679 / Arkansas)).